Reading from the N-terminus, the 335-residue chain is Pyridoxal 5'-phosphate synthase subunit PdxS (335 aa).

A D-ribose 5-phosphate-binding site is contributed by Asp30. Lys87 serves as the catalytic Schiff-base intermediate with D-ribose 5-phosphate. A D-ribose 5-phosphate-binding site is contributed by Gly159. D-glyceraldehyde 3-phosphate is bound at residue Arg171. D-ribose 5-phosphate is bound by residues Gly257 and 278 to 279; that span reads GS.

The protein belongs to the PdxS/SNZ family. As to quaternary structure, in the presence of PdxT, forms a dodecamer of heterodimers.

The enzyme catalyses aldehydo-D-ribose 5-phosphate + D-glyceraldehyde 3-phosphate + L-glutamine = pyridoxal 5'-phosphate + L-glutamate + phosphate + 3 H2O + H(+). The protein operates within cofactor biosynthesis; pyridoxal 5'-phosphate biosynthesis. Its function is as follows. Catalyzes the formation of pyridoxal 5'-phosphate from ribose 5-phosphate (RBP), glyceraldehyde 3-phosphate (G3P) and ammonia. The ammonia is provided by the PdxT subunit. Can also use ribulose 5-phosphate and dihydroxyacetone phosphate as substrates, resulting from enzyme-catalyzed isomerization of RBP and G3P, respectively. In Pyrococcus furiosus (strain ATCC 43587 / DSM 3638 / JCM 8422 / Vc1), this protein is Pyridoxal 5'-phosphate synthase subunit PdxS.